The following is a 341-amino-acid chain: tRNA N6-adenosine threonylcarbamoyltransferase (341 aa).

Fe cation is bound by residues histidine 117 and histidine 121. Substrate contacts are provided by residues 140-144, aspartate 173, glycine 186, and asparagine 278; that span reads VVSGG. Aspartate 306 is a Fe cation binding site.

Belongs to the KAE1 / TsaD family. The cofactor is Fe(2+).

The protein localises to the cytoplasm. The enzyme catalyses L-threonylcarbamoyladenylate + adenosine(37) in tRNA = N(6)-L-threonylcarbamoyladenosine(37) in tRNA + AMP + H(+). In terms of biological role, required for the formation of a threonylcarbamoyl group on adenosine at position 37 (t(6)A37) in tRNAs that read codons beginning with adenine. Is involved in the transfer of the threonylcarbamoyl moiety of threonylcarbamoyl-AMP (TC-AMP) to the N6 group of A37, together with TsaE and TsaB. TsaD likely plays a direct catalytic role in this reaction. This Symbiobacterium thermophilum (strain DSM 24528 / JCM 14929 / IAM 14863 / T) protein is tRNA N6-adenosine threonylcarbamoyltransferase.